We begin with the raw amino-acid sequence, 1184 residues long: DNA polymerase III subunit alpha (1184 aa).

The protein belongs to the DNA polymerase type-C family. DnaE subfamily. As to quaternary structure, the Pol III holoenzyme complex contains at least 10 different subunits organized into 3 functionally essential subassemblies: the Pol III core, the beta sliding clamp processivity factor and the clamp-loading complex. The Pol III core (subunits alpha, epsilon and theta) contains the polymerase and the 3'-5' exonuclease proofreading activities. The polymerase is tethered to the template via the dimeric beta sliding clamp processivity factor. The clamp loader (also called gamma complex) assembles the beta sliding clamp onto the primed template and plays a central role in the organization and communication at the replication fork. The clamp-loading complex contains delta, delta', psi and chi, and 3 copies of either or both of two different DnaX proteins, gamma and tau. The DNA replisome complex has a single clamp loader (3 tau and 1 each of delta, delta', psi and chi subunits) which binds 3 Pol III cores (1 core on the leading strand and 2 on the lagging strand) each with a beta sliding clamp dimer. Interacts with the beta-sliding clamp (DnaN). Co-immunoprecipitates with DarG in the presence and absence of darT.

The protein resides in the cytoplasm. The enzyme catalyses DNA(n) + a 2'-deoxyribonucleoside 5'-triphosphate = DNA(n+1) + diphosphate. Functionally, DNA polymerase III is a complex, multichain enzyme responsible for most of the replicative synthesis in bacteria. Pol III also exhibits 3' to 5' exonuclease activity. The alpha chain is the DNA polymerase. This chain is DNA polymerase III subunit alpha (dnaE1), found in Mycobacterium tuberculosis (strain ATCC 25618 / H37Rv).